The chain runs to 93 residues: UPF0358 protein lin1058 (93 aa).

It belongs to the UPF0358 family.

The sequence is that of UPF0358 protein lin1058 from Listeria innocua serovar 6a (strain ATCC BAA-680 / CLIP 11262).